The chain runs to 481 residues: Argininosuccinate lyase (481 aa).

The protein belongs to the lyase 1 family. Argininosuccinate lyase subfamily.

It is found in the cytoplasm. The enzyme catalyses 2-(N(omega)-L-arginino)succinate = fumarate + L-arginine. The protein operates within amino-acid biosynthesis; L-arginine biosynthesis; L-arginine from L-ornithine and carbamoyl phosphate: step 3/3. The protein is Argininosuccinate lyase of Methanococcus maripaludis (strain DSM 14266 / JCM 13030 / NBRC 101832 / S2 / LL).